A 462-amino-acid chain; its full sequence is ATP synthase subunit beta (462 aa).

151–158 (GGAGVGKT) serves as a coordination point for ATP.

Belongs to the ATPase alpha/beta chains family. In terms of assembly, F-type ATPases have 2 components, CF(1) - the catalytic core - and CF(0) - the membrane proton channel. CF(1) has five subunits: alpha(3), beta(3), gamma(1), delta(1), epsilon(1). CF(0) has four main subunits: a(1), b(1), b'(1) and c(9-12).

It is found in the cell inner membrane. The enzyme catalyses ATP + H2O + 4 H(+)(in) = ADP + phosphate + 5 H(+)(out). In terms of biological role, produces ATP from ADP in the presence of a proton gradient across the membrane. The catalytic sites are hosted primarily by the beta subunits. The sequence is that of ATP synthase subunit beta from Chlorobium phaeobacteroides (strain DSM 266 / SMG 266 / 2430).